Consider the following 571-residue polypeptide: Sulfite reductase [NADPH] hemoprotein beta-component (571 aa).

4 residues coordinate [4Fe-4S] cluster: C436, C442, C481, and C485. Position 485 (C485) interacts with siroheme.

It belongs to the nitrite and sulfite reductase 4Fe-4S domain family. In terms of assembly, alpha(8)-beta(8). The alpha component is a flavoprotein, the beta component is a hemoprotein. Siroheme is required as a cofactor. [4Fe-4S] cluster serves as cofactor.

It catalyses the reaction hydrogen sulfide + 3 NADP(+) + 3 H2O = sulfite + 3 NADPH + 4 H(+). Its pathway is sulfur metabolism; hydrogen sulfide biosynthesis; hydrogen sulfide from sulfite (NADPH route): step 1/1. In terms of biological role, component of the sulfite reductase complex that catalyzes the 6-electron reduction of sulfite to sulfide. This is one of several activities required for the biosynthesis of L-cysteine from sulfate. The protein is Sulfite reductase [NADPH] hemoprotein beta-component of Anoxybacillus flavithermus (strain DSM 21510 / WK1).